A 74-amino-acid polypeptide reads, in one-letter code: NADH dehydrogenase [ubiquinone] 1 alpha subcomplex assembly factor 8 (74 aa).

A CHCH domain is found at 22–69 (LAACGAEAAAYGRCVQASTAPGGRLSKDFCAREFEALRSCFAAAAKKT). 2 consecutive short sequence motifs (cx9C motif) follow at residues 25–35 (CGAEAAAYGRC) and 51–61 (CAREFEALRSC). Disulfide bonds link Cys-25/Cys-61 and Cys-35/Cys-51.

As to quaternary structure, interacts with NDUFAF5.

The protein resides in the mitochondrion. Involved in the assembly of mitochondrial NADH:ubiquinone oxidoreductase complex (complex I, MT-ND1). Required to stabilize NDUFAF5. The polypeptide is NADH dehydrogenase [ubiquinone] 1 alpha subcomplex assembly factor 8 (Homo sapiens (Human)).